Here is a 334-residue protein sequence, read N- to C-terminus: Tryptophan--tRNA ligase (334 aa).

Residues 11–13 (QPS) and 19–20 (GN) contribute to the ATP site. The 'HIGH' region signature appears at 12-20 (PSGELTIGN). Position 135 (D135) interacts with L-tryptophan. ATP contacts are provided by residues 147–149 (GED), V186, and 195–199 (KMSKS). Residues 195–199 (KMSKS) carry the 'KMSKS' region motif.

Belongs to the class-I aminoacyl-tRNA synthetase family. Homodimer.

It is found in the cytoplasm. The catalysed reaction is tRNA(Trp) + L-tryptophan + ATP = L-tryptophyl-tRNA(Trp) + AMP + diphosphate + H(+). Catalyzes the attachment of tryptophan to tRNA(Trp). The protein is Tryptophan--tRNA ligase of Escherichia coli O157:H7.